The following is a 260-amino-acid chain: NAD-capped RNA hydrolase NudC (260 aa).

Substrate is bound at residue arginine 69. The Zn(2+) site is built by cysteine 98 and cysteine 101. Glutamate 111 contributes to the substrate binding site. Residues cysteine 116 and cysteine 119 each coordinate Zn(2+). Tyrosine 124 serves as a coordination point for substrate. The Nudix hydrolase domain occupies 125 to 248 (PQIAPCIIVA…TVARRLIEDT (124 aa)). Alanine 158, glutamate 174, and glutamate 178 together coordinate a divalent metal cation. Residues 159–180 (GFVEVGETLEQTVVREVMEESQ) carry the Nudix box motif. 192–199 (QPWPFPHS) provides a ligand contact to substrate. Residue glutamate 219 participates in a divalent metal cation binding. Alanine 241 contacts substrate.

The protein belongs to the Nudix hydrolase family. NudC subfamily. As to quaternary structure, homodimer. The cofactor is Mg(2+). Mn(2+) serves as cofactor. It depends on Zn(2+) as a cofactor.

The enzyme catalyses a 5'-end NAD(+)-phospho-ribonucleoside in mRNA + H2O = a 5'-end phospho-adenosine-phospho-ribonucleoside in mRNA + beta-nicotinamide D-ribonucleotide + 2 H(+). The catalysed reaction is NAD(+) + H2O = beta-nicotinamide D-ribonucleotide + AMP + 2 H(+). It carries out the reaction NADH + H2O = reduced beta-nicotinamide D-ribonucleotide + AMP + 2 H(+). MRNA decapping enzyme that specifically removes the nicotinamide adenine dinucleotide (NAD) cap from a subset of mRNAs by hydrolyzing the diphosphate linkage to produce nicotinamide mononucleotide (NMN) and 5' monophosphate mRNA. The NAD-cap is present at the 5'-end of some mRNAs and stabilizes RNA against 5'-processing. Has preference for mRNAs with a 5'-end purine. Catalyzes the hydrolysis of a broad range of dinucleotide pyrophosphates. In Pectobacterium carotovorum subsp. carotovorum (strain PC1), this protein is NAD-capped RNA hydrolase NudC.